The primary structure comprises 593 residues: MESGNVVNAQPELSGIIDGSKSYVYEQLWKLCAGPLCDIPKLGEKVYYFPQGHIELVETSTREELNELQPICDLPSKLQCRVIAIHLKVENNSDETYAEITLMPDTTQVVIPTQNENQFRPLVNSFTKVLTASDTSAHGGFFVPKKHAIECLPSLDMSQPLPAQELLAIDLHGNQWRFNHNYRGTPQRHLLTTGWNAFTTSKKLVAGDVIVFVRGETGELRVGIRRARHQQGNIPSSIVSIDCMRHGVVASAKHAFDNQCMFTVVYKPRSSKFIVSYDKFLDAVNNKFNVGSRFTMRLEGDDFSERRCFGTIIGVSDFSPHWKCSEWRSLEVQWDEFTSFPGPKKVSPWDIEHLMPAINVPRSFLLKNKRLREVNEIGSSSSHLLPPILTQGQENEQLSVASPMNISLRYRDATEDAMNPSKLLMSYPVQPMPKLNYNNQMVTEMEENITTKTGTNFRLFGVTLDTPPVIKDPIEEIGSEISKLTEGKKFGLSQTLRSPTEIQNKQFSSSRTCTKVQMQGVTIGRAVDLSVLNGYDQLILELEKLFDIKGQLQTRNQWEIAFTDSDEDKMLVGDDPWPEFCNMVKKIFIQKRR.

The segment at residues 126 to 228 (FTKVLTASDT…ELRVGIRRAR (103 aa)) is a DNA-binding region (TF-B3). Residues 511-592 (RTCTKVQMQG…MVKKIFIQKR (82 aa)) form the PB1 domain.

This sequence belongs to the ARF family. In terms of assembly, homodimers and heterodimers.

It localises to the nucleus. Its function is as follows. Auxin response factors (ARFs) are transcriptional factors that bind specifically to the DNA sequence 5'-TGTCTC-3' found in the auxin-responsive promoter elements (AuxREs). Could act as transcriptional activator or repressor. Formation of heterodimers with Aux/IAA proteins may alter their ability to modulate early auxin response genes expression. The chain is Auxin response factor 12 (ARF12) from Arabidopsis thaliana (Mouse-ear cress).